Consider the following 494-residue polypeptide: Endoglucanase 22 (494 aa).

The signal sequence occupies residues 1–21; the sequence is MKPLVCSFIVILLILLPTTIS. Asp-76 functions as the Nucleophile in the catalytic mechanism. His-413 is an active-site residue. The N-linked (GlcNAc...) asparagine glycan is linked to Asn-468. The active site involves Glu-473.

This sequence belongs to the glycosyl hydrolase 9 (cellulase E) family.

The protein localises to the secreted. The catalysed reaction is Endohydrolysis of (1-&gt;4)-beta-D-glucosidic linkages in cellulose, lichenin and cereal beta-D-glucans.. The sequence is that of Endoglucanase 22 (GH9B16) from Arabidopsis thaliana (Mouse-ear cress).